A 443-amino-acid polypeptide reads, in one-letter code: Putative cytochrome bd menaquinol oxidase subunit I (443 aa).

The next 9 helical transmembrane spans lie at 19-39 (IIFA…ELIY), 60-80 (VLLG…ALLW), 93-113 (LPFQ…SIYV), 125-145 (IVAV…ITNV), 176-196 (FFIT…FIVA), 219-239 (ALLL…LNGH), 322-342 (LFNA…IGVV), 357-377 (LIIF…GWIF), and 405-425 (VLFL…VYVL). His182 lines the heme b pocket.

Belongs to the cytochrome ubiquinol oxidase subunit 1 family. Requires heme b as cofactor.

The protein resides in the cell membrane. Its function is as follows. May have a role in sporulation. Can compensate for the loss of cytochrome aa3. The sequence is that of Putative cytochrome bd menaquinol oxidase subunit I (ythA) from Bacillus subtilis (strain 168).